The following is a 140-amino-acid chain: FLYWCH family member 2 (140 aa).

Disordered stretches follow at residues 1–39 (MPLPEPSEQEGESVKAGQEPSSKPGTEVVPAAPRKPREF) and 83–140 (THPE…GKSL). Ser21 carries the post-translational modification Phosphoserine. A compositionally biased stretch (basic and acidic residues) spans 98-114 (PEQKRSRQDPGADRTED). A compositionally biased stretch (low complexity) spans 118–127 (AAGPPEAAGE).

This Pongo abelii (Sumatran orangutan) protein is FLYWCH family member 2 (FLYWCH2).